Consider the following 492-residue polypeptide: 2-succinylbenzoate--CoA ligase (492 aa).

It belongs to the ATP-dependent AMP-binding enzyme family. MenE subfamily.

The catalysed reaction is 2-succinylbenzoate + ATP + CoA = 2-succinylbenzoyl-CoA + AMP + diphosphate. The protein operates within quinol/quinone metabolism; 1,4-dihydroxy-2-naphthoate biosynthesis; 1,4-dihydroxy-2-naphthoate from chorismate: step 5/7. It participates in quinol/quinone metabolism; menaquinone biosynthesis. Functionally, converts 2-succinylbenzoate (OSB) to 2-succinylbenzoyl-CoA (OSB-CoA). This is 2-succinylbenzoate--CoA ligase from Geobacillus sp. (strain WCH70).